The primary structure comprises 1306 residues: DNA-directed RNA polymerase subunit beta' (1306 aa).

Positions 214, 285, 292, and 295 each coordinate Zn(2+). Disordered regions lie at residues 1234 to 1263 (LDNG…PNRL) and 1281 to 1306 (IARA…DDDK). The segment covering 1247-1259 (QGERDNNNSDKKP) has biased composition (basic and acidic residues).

This sequence belongs to the RNA polymerase beta' chain family. RpoC2 subfamily. In terms of assembly, in cyanobacteria the RNAP catalytic core is composed of 2 alpha, 1 beta, 1 beta', 1 gamma and 1 omega subunit. When a sigma factor is associated with the core the holoenzyme is formed, which can initiate transcription. It depends on Zn(2+) as a cofactor.

The catalysed reaction is RNA(n) + a ribonucleoside 5'-triphosphate = RNA(n+1) + diphosphate. In terms of biological role, DNA-dependent RNA polymerase catalyzes the transcription of DNA into RNA using the four ribonucleoside triphosphates as substrates. The protein is DNA-directed RNA polymerase subunit beta' of Crocosphaera subtropica (strain ATCC 51142 / BH68) (Cyanothece sp. (strain ATCC 51142)).